The following is a 165-amino-acid chain: Anaerobic nitrite reductase GLB1 (165 aa).

Positions 12–162 constitute a Globin domain; that stretch reads VFGEEQEALV…LVAAIKREMK (151 aa). Positions 45-49 match the Homodimerization motif; sequence EIAPS. The heme b site is built by Ser-55, Lys-69, His-73, Arg-103, Thr-107, and His-108. A Homodimerization motif is present at residues 115–127; sequence DGHFEVTGFALLE.

The protein belongs to the plant globin family. In terms of assembly, homodimer. Heme b serves as cofactor. As to expression, in embryonic organs and at low levels in vegetative organs.

Its subcellular location is the cytoplasm. The protein localises to the nucleus. The enzyme catalyses Fe(III)-heme b-[protein] + nitric oxide + H2O = Fe(II)-heme b-[protein] + nitrite + 2 H(+). Phytoglobin that reduces nitrite to nitric oxide (NO) under anoxic conditions (e.g. during flooding or in waterlogged soil). May not function as an oxygen storage or transport protein. Has an unusually high affinity for O(2) through an hexacoordinate heme iron because of a very low dissociation constant. The sequence is that of Anaerobic nitrite reductase GLB1 (HB) from Zea mays (Maize).